The following is a 270-amino-acid chain: Bis(5'-nucleosyl)-tetraphosphatase, symmetrical (270 aa).

This sequence belongs to the Ap4A hydrolase family.

The enzyme catalyses P(1),P(4)-bis(5'-adenosyl) tetraphosphate + H2O = 2 ADP + 2 H(+). Hydrolyzes diadenosine 5',5'''-P1,P4-tetraphosphate to yield ADP. The chain is Bis(5'-nucleosyl)-tetraphosphatase, symmetrical from Actinobacillus pleuropneumoniae serotype 3 (strain JL03).